Reading from the N-terminus, the 141-residue chain is Small ribosomal subunit protein uS12 (141 aa).

Over residues 1 to 11 (MPTISQLVTTS) the composition is skewed to polar residues. The disordered stretch occupies residues 1–22 (MPTISQLVTTSRQDKNYKSKSP). Aspartate 102 carries the post-translational modification 3-methylthioaspartic acid.

It belongs to the universal ribosomal protein uS12 family. Part of the 30S ribosomal subunit. Contacts proteins S8 and S17. May interact with IF1 in the 30S initiation complex.

With S4 and S5 plays an important role in translational accuracy. Functionally, interacts with and stabilizes bases of the 16S rRNA that are involved in tRNA selection in the A site and with the mRNA backbone. Located at the interface of the 30S and 50S subunits, it traverses the body of the 30S subunit contacting proteins on the other side and probably holding the rRNA structure together. The combined cluster of proteins S8, S12 and S17 appears to hold together the shoulder and platform of the 30S subunit. The chain is Small ribosomal subunit protein uS12 from Acholeplasma laidlawii (strain PG-8A).